The primary structure comprises 405 residues: Peroxisome biogenesis factor 3 (405 aa).

Residues 1–26 (MENFQFEDLSPNKVSKVYQDLKKFGS) lie on the Cytoplasmic side of the membrane. The helical transmembrane segment at 27–49 (FLYNHKMGVFLVSFSSGVAYLYH) threads the bilayer. Topologically, residues 50–124 (NITQSHKRKQ…EKLKLTDQLK (75 aa)) are peroxisomal. The chain crosses the membrane as a helical span at residues 125-144 (VSIITKLFSVLYIIPMVTIF). At 145 to 405 (NRLQINLIGK…NDLDFNKVQF (261 aa)) the chain is on the cytoplasmic side.

This sequence belongs to the peroxin-3 family.

The protein localises to the peroxisome membrane. Involved in peroxisome biosynthesis. The sequence is that of Peroxisome biogenesis factor 3 (pex3) from Dictyostelium discoideum (Social amoeba).